The chain runs to 107 residues: Lipid-anchored protein YDL012C (107 aa).

Over residues 1–18 the composition is skewed to polar residues; that stretch reads MSAQDYYGNSASKQSYSR. The segment at 1 to 86 is disordered; sequence MSAQDYYGNS…VQQQPASSGN (86 aa). S2 is subject to N-acetylserine. K13 is covalently cross-linked (Glycyl lysine isopeptide (Lys-Gly) (interchain with G-Cter in ubiquitin)). Residues 35-81 are compositionally biased toward low complexity; the sequence is PSQSQQNYYPPQQQQQQYQQQPQYYQQQQPQYYQQHPQQPIYVQQQP.

Belongs to the CYSTM1 family.

The protein localises to the cell membrane. This Saccharomyces cerevisiae (strain ATCC 204508 / S288c) (Baker's yeast) protein is Lipid-anchored protein YDL012C.